A 272-amino-acid chain; its full sequence is Orotidine 5'-phosphate decarboxylase (272 aa).

Lys-95 (proton donor) is an active-site residue.

Belongs to the OMP decarboxylase family. Type 2 subfamily.

The catalysed reaction is orotidine 5'-phosphate + H(+) = UMP + CO2. The protein operates within pyrimidine metabolism; UMP biosynthesis via de novo pathway; UMP from orotate: step 2/2. This chain is Orotidine 5'-phosphate decarboxylase, found in Cupriavidus necator (strain ATCC 17699 / DSM 428 / KCTC 22496 / NCIMB 10442 / H16 / Stanier 337) (Ralstonia eutropha).